The primary structure comprises 66 residues: Large ribosomal subunit protein uL29 (66 aa).

Belongs to the universal ribosomal protein uL29 family.

The protein is Large ribosomal subunit protein uL29 of Francisella philomiragia subsp. philomiragia (strain ATCC 25017 / CCUG 19701 / FSC 153 / O#319-036).